A 243-amino-acid polypeptide reads, in one-letter code: 2-C-methyl-D-erythritol 4-phosphate cytidylyltransferase (243 aa).

The protein belongs to the IspD/TarI cytidylyltransferase family. IspD subfamily.

The catalysed reaction is 2-C-methyl-D-erythritol 4-phosphate + CTP + H(+) = 4-CDP-2-C-methyl-D-erythritol + diphosphate. It participates in isoprenoid biosynthesis; isopentenyl diphosphate biosynthesis via DXP pathway; isopentenyl diphosphate from 1-deoxy-D-xylulose 5-phosphate: step 2/6. Its function is as follows. Catalyzes the formation of 4-diphosphocytidyl-2-C-methyl-D-erythritol from CTP and 2-C-methyl-D-erythritol 4-phosphate (MEP). This is 2-C-methyl-D-erythritol 4-phosphate cytidylyltransferase from Aeromonas hydrophila subsp. hydrophila (strain ATCC 7966 / DSM 30187 / BCRC 13018 / CCUG 14551 / JCM 1027 / KCTC 2358 / NCIMB 9240 / NCTC 8049).